Reading from the N-terminus, the 174-residue chain is Small ribosomal subunit protein uS12m (174 aa).

It belongs to the universal ribosomal protein uS12 family. As to quaternary structure, component of the mitochondrial small ribosomal subunit (mt-SSU). Mature N.crassa 74S mitochondrial ribosomes consist of a small (37S) and a large (54S) subunit. The 37S small subunit contains a 16S ribosomal RNA (16S mt-rRNA) and 32 different proteins. The 54S large subunit contains a 23S rRNA (23S mt-rRNA) and 42 different proteins. uS12m forms part of the decoding center of the mt-SSU.

The protein localises to the mitochondrion. Functionally, component of the mitochondrial ribosome (mitoribosome), a dedicated translation machinery responsible for the synthesis of mitochondrial genome-encoded proteins, including at least some of the essential transmembrane subunits of the mitochondrial respiratory chain. The mitoribosomes are attached to the mitochondrial inner membrane and translation products are cotranslationally integrated into the membrane. This is Small ribosomal subunit protein uS12m (mrps12) from Neurospora crassa (strain ATCC 24698 / 74-OR23-1A / CBS 708.71 / DSM 1257 / FGSC 987).